Consider the following 350-residue polypeptide: DTSSLIVEDAPDHVRPYVIRHYSHARAVTVDTQLYRFYVTGPSSGYAFTLMGTNAPHSDALGVLPHIHQKHYENFYCNKGSFQLWAQSGNETQQTRVLSSGDYGSVPRNVTHTFQIQDPDTEMTGVIVPGGFEDLFYYLGTNATDTTHTPYIPSSSDSSSTTGPDSSTISTLQSFDVYAELSFTPRTDTVNGTAPANTVWHTGANALASTAGDPYFIANGWGPKYLNSQYGYQIVAPFVTATQAQDTNYTLSTISMSTTPSTVTVPTWSFPGACAFQVQEGRVVVQIGDYAATELGSGDVAFIPGGVEFKYYSEAYFSKVLFVSSGSDGLDQNLVNGGEEWSSVSFPADW.

A cupin 1 region spans residues 1 to 145 (DTSSLIVEDA…FYYLGTNATD (145 aa)). Positions 66, 68, and 73 each coordinate Cu cation. Residue His66 coordinates substrate. Position 73 (Glu73) interacts with substrate. N-linked (GlcNAc...) asparagine glycosylation is found at Asn90 and Asn109. His112 lines the Cu cation pocket. N-linked (GlcNAc...) asparagine glycosylation is present at Asn142. Positions 146–205 (TTHTPYIPSSSDSSSTTGPDSSTISTLQSFDVYAELSFTPRTDTVNGTAPANTVWHTGAN) are linker. The tract at residues 148–167 (HTPYIPSSSDSSSTTGPDSS) is disordered. Over residues 152-167 (IPSSSDSSSTTGPDSS) the composition is skewed to low complexity. N-linked (GlcNAc...) asparagine glycosylation is found at Asn191 and Asn248. Positions 206–350 (ALASTAGDPY…WSSVSFPADW (145 aa)) are cupin 2.

In terms of assembly, homodimer. Cu cation serves as cofactor. Post-translationally, the N-linked glycan at Asn-191 consists of Man(5)-GlcNAc(2).

It catalyses the reaction quercetin + O2 = 2-(3,4-dihydroxybenzoyloxy)-4,6-dihydroxybenzoate + CO. Its pathway is flavonoid metabolism; quercetin degradation. With respect to regulation, inhibited by diethyldithiocarbamate and kojic acid. Performs the first step in the degradation of the flavonoid quercetin by a dioxygenase reaction. The enzyme catalyzes the cleavage of the O-heteroaromatic ring of the flavonol quercetin yielding the depside 2-protocatechuoyl-phloroglucinol carboxylic acid and carbon monoxide. This involves the remarkable dioxygenolytic cleavage of two carbon-carbon bonds. The sequence is that of Quercetin 2,3-dioxygenase from Aspergillus japonicus.